A 426-amino-acid polypeptide reads, in one-letter code: Enolase (426 aa).

Position 165 (glutamine 165) interacts with (2R)-2-phosphoglycerate. The active-site Proton donor is the glutamate 209. Aspartate 244, glutamate 287, and aspartate 313 together coordinate Mg(2+). 4 residues coordinate (2R)-2-phosphoglycerate: lysine 338, arginine 367, serine 368, and lysine 389. The Proton acceptor role is filled by lysine 338.

This sequence belongs to the enolase family. It depends on Mg(2+) as a cofactor.

It localises to the cytoplasm. Its subcellular location is the secreted. The protein localises to the cell surface. It catalyses the reaction (2R)-2-phosphoglycerate = phosphoenolpyruvate + H2O. It participates in carbohydrate degradation; glycolysis; pyruvate from D-glyceraldehyde 3-phosphate: step 4/5. Functionally, catalyzes the reversible conversion of 2-phosphoglycerate (2-PG) into phosphoenolpyruvate (PEP). It is essential for the degradation of carbohydrates via glycolysis. This chain is Enolase, found in Methanococcus maripaludis (strain C5 / ATCC BAA-1333).